The primary structure comprises 256 residues: Flap endonuclease Xni (256 aa).

Residue D105 participates in Mg(2+) binding. Residues S164–V250 enclose the 5'-3' exonuclease domain. M172, A173, P181, I183, and I186 together coordinate K(+). An interaction with DNA region spans residues G185–S190.

This sequence belongs to the Xni family. Mg(2+) serves as cofactor. Requires K(+) as cofactor.

Has flap endonuclease activity. During DNA replication, flap endonucleases cleave the 5'-overhanging flap structure that is generated by displacement synthesis when DNA polymerase encounters the 5'-end of a downstream Okazaki fragment. The polypeptide is Flap endonuclease Xni (Shewanella loihica (strain ATCC BAA-1088 / PV-4)).